Here is a 404-residue protein sequence, read N- to C-terminus: Serine/threonine transporter SstT (404 aa).

Transmembrane regions (helical) follow at residues 17-37 (IGIG…LTGF), 39-59 (ILGK…VFAL), 75-95 (MTLI…VAVL), 138-158 (ALAT…GLAL), 179-199 (IVVW…FTTI), 212-232 (FLIL…NPLI), 287-307 (IPLG…VLTL), and 313-333 (FGIP…AVSA).

It belongs to the dicarboxylate/amino acid:cation symporter (DAACS) (TC 2.A.23) family.

The protein localises to the cell membrane. It catalyses the reaction L-serine(in) + Na(+)(in) = L-serine(out) + Na(+)(out). It carries out the reaction L-threonine(in) + Na(+)(in) = L-threonine(out) + Na(+)(out). In terms of biological role, involved in the import of serine and threonine into the cell, with the concomitant import of sodium (symport system). This is Serine/threonine transporter SstT from Streptococcus pyogenes serotype M2 (strain MGAS10270).